A 228-amino-acid chain; its full sequence is Adenosylcobinamide-GDP ribazoletransferase (228 aa).

A run of 6 helical transmembrane segments spans residues 24–44 (VWML…ILYL), 50–70 (NVLS…DGLA), 96–116 (IAGT…LFSA), 117–137 (PFYS…LALA), 159–176 (VFLG…ILLY), and 181–198 (IFAL…KISL).

Belongs to the CobS family. Mg(2+) is required as a cofactor.

It localises to the cell membrane. The enzyme catalyses alpha-ribazole + adenosylcob(III)inamide-GDP = adenosylcob(III)alamin + GMP + H(+). The catalysed reaction is alpha-ribazole 5'-phosphate + adenosylcob(III)inamide-GDP = adenosylcob(III)alamin 5'-phosphate + GMP + H(+). Its pathway is cofactor biosynthesis; adenosylcobalamin biosynthesis; adenosylcobalamin from cob(II)yrinate a,c-diamide: step 7/7. Joins adenosylcobinamide-GDP and alpha-ribazole to generate adenosylcobalamin (Ado-cobalamin). Also synthesizes adenosylcobalamin 5'-phosphate from adenosylcobinamide-GDP and alpha-ribazole 5'-phosphate. In Pyrococcus furiosus (strain ATCC 43587 / DSM 3638 / JCM 8422 / Vc1), this protein is Adenosylcobinamide-GDP ribazoletransferase.